Consider the following 394-residue polypeptide: Elongation factor Tu (394 aa).

Residues 10 to 204 enclose the tr-type G domain; it reads KTHLNVGTIG…TLDTYIEDPV (195 aa). Positions 19 to 26 are G1; that stretch reads GHVDHGKT. Residue 19 to 26 coordinates GTP; sequence GHVDHGKT. A Mg(2+)-binding site is contributed by T26. A G2 region spans residues 60-64; sequence GITIK. Residues 81–84 form a G3 region; it reads DCPG. GTP is bound by residues 81–85 and 136–139; these read DCPGH and NKCD. The segment at 136 to 139 is G4; it reads NKCD. The G5 stretch occupies residues 174 to 176; sequence SAL.

The protein belongs to the TRAFAC class translation factor GTPase superfamily. Classic translation factor GTPase family. EF-Tu/EF-1A subfamily. In terms of assembly, monomer.

It localises to the cytoplasm. It catalyses the reaction GTP + H2O = GDP + phosphate + H(+). Functionally, GTP hydrolase that promotes the GTP-dependent binding of aminoacyl-tRNA to the A-site of ribosomes during protein biosynthesis. This Aster yellows witches'-broom phytoplasma (strain AYWB) protein is Elongation factor Tu.